Here is a 189-residue protein sequence, read N- to C-terminus: Ribulose bisphosphate carboxylase small subunit, chloroplastic (189 aa).

A chloroplast-targeting transit peptide spans 1 to 66; it reads MASSIMALSS…KTTSNGSRVR (66 aa).

It belongs to the RuBisCO small chain family. Heterohexadecamer of 8 large and 8 small subunits.

The protein localises to the plastid. The protein resides in the chloroplast. Functionally, ruBisCO catalyzes two reactions: the carboxylation of D-ribulose 1,5-bisphosphate, the primary event in carbon dioxide fixation, as well as the oxidative fragmentation of the pentose substrate. Both reactions occur simultaneously and in competition at the same active site. Although the small subunit is not catalytic it is essential for maximal activity. The polypeptide is Ribulose bisphosphate carboxylase small subunit, chloroplastic (Larix laricina (Tamarack)).